Consider the following 354-residue polypeptide: Probable cinnamyl alcohol dehydrogenase 5 (354 aa).

Zn(2+) is bound at residue Cys43. Ser45 provides a ligand contact to NADP(+). Zn(2+)-binding residues include His65, Glu66, Cys96, Cys99, Cys102, Cys110, and Cys159. Residues Thr163, 184–189 (GLGGLG), 207–212 (SSSPGK), Thr247, Gly271, and 294–296 (SCI) contribute to the NADP(+) site.

It belongs to the zinc-containing alcohol dehydrogenase family. In terms of assembly, homodimer. It depends on Zn(2+) as a cofactor.

The enzyme catalyses (E)-cinnamyl alcohol + NADP(+) = (E)-cinnamaldehyde + NADPH + H(+). It catalyses the reaction (E)-coniferol + NADP(+) = (E)-coniferaldehyde + NADPH + H(+). The catalysed reaction is (E)-sinapyl alcohol + NADP(+) = (E)-sinapaldehyde + NADPH + H(+). It carries out the reaction (E)-4-coumaroyl alcohol + NADP(+) = (E)-4-coumaraldehyde + NADPH + H(+). The enzyme catalyses (E)-caffeyl alcohol + NADP(+) = (E)-caffeyl aldehyde + NADPH + H(+). It functions in the pathway aromatic compound metabolism; phenylpropanoid biosynthesis. In terms of biological role, involved in lignin biosynthesis. Catalyzes the final step specific for the production of lignin monomers. Catalyzes the NADPH-dependent reduction of coniferaldehyde, 5-hydroxyconiferaldehyde, sinapaldehyde, 4-coumaraldehyde and caffeyl aldehyde to their respective alcohols. In Oryza sativa subsp. japonica (Rice), this protein is Probable cinnamyl alcohol dehydrogenase 5.